We begin with the raw amino-acid sequence, 1621 residues long: Nestin (1621 aa).

At Met1 the chain carries N-acetylmethionine. Positions 1–7 (MEGCMGE) are head. Residues 8–43 (ESFQMWELNRRLEAYLARVKALEEQNELLSAELGGL) form a coil 1A region. The IF rod domain occupies 8–313 (ESFQMWELNR…TLLEAENSRL (306 aa)). The tract at residues 44 to 55 (RAQSADTSWRAH) is linker 1. Residues 56-151 (ADDELAALRA…VAHEEERVGL (96 aa)) are coil 1B. The tract at residues 152–173 (NAQAACAPRCPAPPRGPPAPAP) is linker 12. The coil 2A stretch occupies residues 174 to 192 (EVEELARRLGEAWRGAVRG). Residues 193–195 (YQE) form a linker 2 region. The segment at 196–313 (RVAHMETSLG…TLLEAENSRL (118 aa)) is coil 2B. A Phosphoserine modification is found at Ser311. Residues 314-1621 (QTPGGGSKTS…DRESWSSGED (1308 aa)) are tail. Thr315 is subject to Phosphothreonine. Phosphoserine is present on Ser325. Thr338 bears the Phosphothreonine mark. Phosphoserine is present on residues Ser355 and Ser358. Thr388 carries the post-translational modification Phosphothreonine. A phosphoserine mark is found at Ser398, Ser471, Ser476, Ser548, Ser564, Ser578, Ser588, Ser638, Ser680, Ser702, Ser746, and Ser768. Residues 439 to 490 (SVLPGPEEPGGQRQEASTGQSPEDHASLAPPLSPDHSSLEAKDGESGGSRVF) form a disordered region. Residues 670–788 (LEKENQEPLR…PPEKVDLEPL (119 aa)) form a disordered region. Basic and acidic residues-rich tracts occupy residues 687 to 725 (EALR…LKTL), 736 to 770 (LETE…RSLG), and 779 to 788 (PPEKVDLEPL). Ser790 is subject to Phosphoserine. A Glycyl lysine isopeptide (Lys-Gly) (interchain with G-Cter in SUMO1); alternate cross-link involves residue Lys811. Residue Lys811 forms a Glycyl lysine isopeptide (Lys-Gly) (interchain with G-Cter in SUMO2); alternate linkage. A phosphoserine mark is found at Ser820, Ser831, and Ser842. At Thr851 the chain carries Phosphothreonine. Residues Ser894, Ser905, Ser913, and Ser934 each carry the phosphoserine modification. The interval 895–1593 (LGAWNLENLR…GSALKTSWAG (699 aa)) is disordered. 4 stretches are compositionally biased toward basic and acidic residues: residues 904–936 (RSPE…RSLE), 949–960 (QRWEDTVEKDQE), 980–994 (LNLR…KEEV), and 1012–1024 (GHPE…EQRG). Position 1016 is a phosphoserine (Ser1016). Residues 1085–1098 (GSEPAMGESAAGAE) are compositionally biased toward low complexity. Positions 1099-1110 (PGPGQGVGGLGD) are enriched in gly residues. Basic and acidic residues-rich tracts occupy residues 1129–1145 (LEAK…KDLE) and 1159–1184 (GKSR…RGAE). Residues Ser1261, Ser1282, Ser1286, Ser1310, Ser1347, Ser1409, Ser1418, and Ser1452 each carry the phosphoserine modification. The span at 1275–1292 (PQEEGEESREESEEDELG) shows a compositional bias: acidic residues. The segment covering 1409–1428 (SDGFADEEESGEEGEEDQEE) has biased composition (acidic residues). 2 stretches are compositionally biased toward low complexity: residues 1440-1453 (GSSV…SSSQ) and 1460-1470 (SDSVSVSVPWD). A compositionally biased stretch (polar residues) spans 1486-1495 (ETESQDSAEP). Ser1496, Ser1498, Ser1577, Ser1617, and Ser1618 each carry phosphoserine.

Belongs to the intermediate filament family. In terms of assembly, forms homodimers and homotetramers in vitro. In mixtures with other intermediate filament proteins such as vimentin and alpha-internexin, tis protein preferentially forms heterodimers which can assemble to form intermediate filaments if nestin does not exceed 25%. Interacts with FHOD3. Post-translationally, constitutively phosphorylated. This increases during mitosis when the cytoplasmic intermediate filament network is reorganized. In terms of tissue distribution, CNS stem cells.

Required for brain and eye development. Promotes the disassembly of phosphorylated vimentin intermediate filaments (IF) during mitosis and may play a role in the trafficking and distribution of IF proteins and other cellular factors to daughter cells during progenitor cell division. Required for survival, renewal and mitogen-stimulated proliferation of neural progenitor cells. The chain is Nestin (NES) from Homo sapiens (Human).